We begin with the raw amino-acid sequence, 293 residues long: Aspartate carbamoyltransferase catalytic subunit (293 aa).

Residues Arg50 and Thr51 each coordinate carbamoyl phosphate. Lys78 lines the L-aspartate pocket. Carbamoyl phosphate is bound by residues Arg100, His127, and Gln130. L-aspartate-binding residues include Arg160 and Arg210. 2 residues coordinate carbamoyl phosphate: Ala253 and Pro254.

This sequence belongs to the aspartate/ornithine carbamoyltransferase superfamily. ATCase family. In terms of assembly, heterododecamer (2C3:3R2) of six catalytic PyrB chains organized as two trimers (C3), and six regulatory PyrI chains organized as three dimers (R2).

It catalyses the reaction carbamoyl phosphate + L-aspartate = N-carbamoyl-L-aspartate + phosphate + H(+). The protein operates within pyrimidine metabolism; UMP biosynthesis via de novo pathway; (S)-dihydroorotate from bicarbonate: step 2/3. In terms of biological role, catalyzes the condensation of carbamoyl phosphate and aspartate to form carbamoyl aspartate and inorganic phosphate, the committed step in the de novo pyrimidine nucleotide biosynthesis pathway. This Staphylococcus epidermidis (strain ATCC 35984 / DSM 28319 / BCRC 17069 / CCUG 31568 / BM 3577 / RP62A) protein is Aspartate carbamoyltransferase catalytic subunit.